Consider the following 333-residue polypeptide: 5-formaminoimidazole-4-carboxamide-1-(beta)-D-ribofuranosyl 5'-monophosphate synthetase (333 aa).

Positions 20 and 85 each coordinate 5-amino-1-(5-phospho-beta-D-ribosyl)imidazole-4-carboxamide. In terms of domain architecture, ATP-grasp spans 106-313 (RELIKWEADQ…YFDRPMDMGE (208 aa)). ATP contacts are provided by residues 136-187 (PEEV…VPAY) and Glu-209. Asn-229 is a binding site for 5-amino-1-(5-phospho-beta-D-ribosyl)imidazole-4-carboxamide. Residues Glu-268 and Glu-281 each contribute to the Mg(2+) site.

It belongs to the phosphohexose mutase family. It depends on Mg(2+) as a cofactor. Mn(2+) is required as a cofactor.

The catalysed reaction is 5-amino-1-(5-phospho-beta-D-ribosyl)imidazole-4-carboxamide + formate + ATP = 5-formamido-1-(5-phospho-D-ribosyl)imidazole-4-carboxamide + ADP + phosphate. It participates in purine metabolism; IMP biosynthesis via de novo pathway; 5-formamido-1-(5-phospho-D-ribosyl)imidazole-4-carboxamide from 5-amino-1-(5-phospho-D-ribosyl)imidazole-4-carboxamide (formate route): step 1/1. Its function is as follows. Catalyzes the ATP- and formate-dependent formylation of 5-aminoimidazole-4-carboxamide-1-beta-d-ribofuranosyl 5'-monophosphate (AICAR) to 5-formaminoimidazole-4-carboxamide-1-beta-d-ribofuranosyl 5'-monophosphate (FAICAR) in the absence of folates. This Pyrobaculum islandicum (strain DSM 4184 / JCM 9189 / GEO3) protein is 5-formaminoimidazole-4-carboxamide-1-(beta)-D-ribofuranosyl 5'-monophosphate synthetase.